The primary structure comprises 1486 residues: Chromosome partition protein MukB (1486 aa).

Residue 34–41 (GGNGAGKS) participates in ATP binding. 3 coiled-coil regions span residues 326–418 (LEAD…QYNQ), 444–480 (LETFQAKELEATEKMLSLEQKMSMAQTAHSQFEQAYQ), and 509–603 (RHLA…RAPV). Residues 666 to 783 (PGGSEDQRLN…EVPLFGRAAR (118 aa)) are flexible hinge. Coiled coils occupy residues 835 to 923 (EAEI…AKLE), 977 to 1115 (EMLS…TAKA), and 1209 to 1266 (VEAI…QNVS).

Belongs to the SMC family. MukB subfamily. In terms of assembly, homodimerization via its hinge domain. Binds to DNA via its C-terminal region. Interacts, and probably forms a ternary complex, with MukE and MukF via its C-terminal region. The complex formation is stimulated by calcium or magnesium. Interacts with tubulin-related protein FtsZ.

It localises to the cytoplasm. The protein localises to the nucleoid. Functionally, plays a central role in chromosome condensation, segregation and cell cycle progression. Functions as a homodimer, which is essential for chromosome partition. Involved in negative DNA supercoiling in vivo, and by this means organize and compact chromosomes. May achieve or facilitate chromosome segregation by condensation DNA from both sides of a centrally located replisome during cell division. The chain is Chromosome partition protein MukB from Escherichia coli (strain K12 / MC4100 / BW2952).